Here is a 433-residue protein sequence, read N- to C-terminus: ATP-dependent protease ATPase subunit HslU (433 aa).

ATP-binding positions include V18, 60–65 (GVGKTE), D246, E311, and R383.

Belongs to the ClpX chaperone family. HslU subfamily. A double ring-shaped homohexamer of HslV is capped on each side by a ring-shaped HslU homohexamer. The assembly of the HslU/HslV complex is dependent on binding of ATP.

Its subcellular location is the cytoplasm. ATPase subunit of a proteasome-like degradation complex; this subunit has chaperone activity. The binding of ATP and its subsequent hydrolysis by HslU are essential for unfolding of protein substrates subsequently hydrolyzed by HslV. HslU recognizes the N-terminal part of its protein substrates and unfolds these before they are guided to HslV for hydrolysis. This Rhodopseudomonas palustris (strain HaA2) protein is ATP-dependent protease ATPase subunit HslU.